Consider the following 539-residue polypeptide: Chaperonin GroEL (539 aa).

ATP is bound by residues 29–32, 86–90, Gly413, 479–481, and Asp495; these read TLGP, DGTTT, and DAL.

It belongs to the chaperonin (HSP60) family. In terms of assembly, forms a cylinder of 14 subunits composed of two heptameric rings stacked back-to-back. Interacts with the co-chaperonin GroES.

The protein resides in the cytoplasm. The catalysed reaction is ATP + H2O + a folded polypeptide = ADP + phosphate + an unfolded polypeptide.. Functionally, together with its co-chaperonin GroES, plays an essential role in assisting protein folding. The GroEL-GroES system forms a nano-cage that allows encapsulation of the non-native substrate proteins and provides a physical environment optimized to promote and accelerate protein folding. In Thermosipho africanus (strain TCF52B), this protein is Chaperonin GroEL.